A 477-amino-acid polypeptide reads, in one-letter code: Cytochrome P450 monooxygenase poxC (477 aa).

Residues 24–41 traverse the membrane as a helical segment; that stretch reads AWHFAVLSFVYVIARSIY. Position 420 (Cys-420) interacts with heme.

This sequence belongs to the cytochrome P450 family. It depends on heme as a cofactor.

The protein localises to the membrane. It functions in the pathway secondary metabolite biosynthesis. Its function is as follows. Cytochrome P450 monooxygenase; part of the gene cluster that mediates the biosynthesis of oxaleimides, cytotoxic compounds containing an unusual disubstituted succinimide moiety. The first step of the pathway is provided by the HR-PKS poxF that serves in a new mode of collaborative biosynthesis with the PKS-NRPS poxE, by providing the olefin containing amino acid substrate via the synthesis of an ACP-bound dec-4-enoate. The cytochrome P450 monooxygenase poxM-catalyzed oxidation at the alpha-position creates the enzyme-bound 2-hydroxydec-4-enoyl-ACP thioester, which may be prone to spontaneous hydrolysis to yield 2-hydroxydec-4-enoic acid due to increased electrophilicity of the carbonyl. 2-hydroxydec-4-enoic acid can then be further oxidized by poxM to yield the alpha-ketoacid 2-oxodec-4-enoicacid, which is reductively aminated by the aminotransferase poxL to yield (S,E)-2-aminodec-4-enoic acid. The Hybrid PKS-NRPS synthetase poxE then performs condensation between the octaketide product of its PKS modules and the amino group of (S,E)-2-aminodec-4-enoic acid which is activated and incorporated by the adenylation domain. The resulting aminoacyl product can be cyclized by the Diels-Alderase PoxQ and reductively released by the reductive (R) domain of poxE to yield an aldehyde intermediate. The released aldehyde is then substrate for a Knoevenagel condensation by the hydrolyase poxO followed by an oxidation at the 5-position of the pyrrolidone ring. The presence of the olefin from the amino acid building block allows for migration of the substituted allyl group to occur. This allylic transposition reaction takes place in a conjugate addition, semipinacol-like fashion to yield a succinimide intermediate. Iterative two-electron oxidations of the C7 methyl of the succinimide intermediate to the carboxylic acid can be catalyzed by one of two remaining cytochrome P450 monooxygenasess poxC or poxD to yield oxaleimide A. Subsequent oxidation yields the maleimide scaffold oxaleimide I. Both oxaleimide A and oxaleimide I can undergo oxidative modifications in the decalin ring to yield the series of products oxaleimides B to H. In Penicillium oxalicum (strain 114-2 / CGMCC 5302) (Penicillium decumbens), this protein is Cytochrome P450 monooxygenase poxC.